The chain runs to 432 residues: Glutamate-1-semialdehyde 2,1-aminomutase 2 (432 aa).

Lys268 is modified (N6-(pyridoxal phosphate)lysine).

Belongs to the class-III pyridoxal-phosphate-dependent aminotransferase family. HemL subfamily. As to quaternary structure, homodimer. It depends on pyridoxal 5'-phosphate as a cofactor.

The protein localises to the cytoplasm. The enzyme catalyses (S)-4-amino-5-oxopentanoate = 5-aminolevulinate. The protein operates within porphyrin-containing compound metabolism; protoporphyrin-IX biosynthesis; 5-aminolevulinate from L-glutamyl-tRNA(Glu): step 2/2. The protein is Glutamate-1-semialdehyde 2,1-aminomutase 2 of Listeria monocytogenes serotype 4b (strain F2365).